A 203-amino-acid chain; its full sequence is Ras-like protein 1 (203 aa).

17–24 (GGGGVGKS) is a binding site for GTP. An Effector region motif is present at residues 39–47 (YDPTIEDSY). GTP is bound by residues 64–68 (DTAGQ) and 123–126 (NKCD). Cys-200 bears the Cysteine methyl ester mark. A lipid anchor (S-farnesyl cysteine) is attached at Cys-200. Positions 201–203 (ILM) are cleaved as a propeptide — removed in mature form.

It belongs to the small GTPase superfamily. Ras family.

The protein localises to the cell membrane. It catalyses the reaction GTP + H2O = GDP + phosphate + H(+). Its activity is regulated as follows. Alternates between an inactive form bound to GDP and an active form bound to GTP. Activated by a guanine nucleotide-exchange factor (GEF) and inactivated by a GTPase-activating protein (GAP). The polypeptide is Ras-like protein 1 (RAS1) (Mucor circinelloides f. lusitanicus (Mucor racemosus var. lusitanicus)).